The following is a 396-amino-acid chain: Cysteine protease ATG4A (396 aa).

The active-site Nucleophile is C77. Active-site residues include D276 and H278. The LIR signature appears at F390 to L393.

The protein belongs to the peptidase C54 family. As to quaternary structure, interacts with ATG9A; the interaction is direct.

It is found in the cytoplasm. The catalysed reaction is [protein]-C-terminal L-amino acid-glycyl-phosphatidylethanolamide + H2O = [protein]-C-terminal L-amino acid-glycine + a 1,2-diacyl-sn-glycero-3-phosphoethanolamine. With respect to regulation, inhibited by N-ethylmaleimide. Redox-regulated during autophagy since reducing conditions activate ATG4A whereas an oxidizing environment such as the presence of H(2)O(2) inhibits its activity. Functionally, cysteine protease that plays a key role in autophagy by mediating both proteolytic activation and delipidation of ATG8 family proteins. The protease activity is required for proteolytic activation of ATG8 family proteins: cleaves the C-terminal amino acid of ATG8 proteins to reveal a C-terminal glycine. Exposure of the glycine at the C-terminus is essential for ATG8 proteins conjugation to phosphatidylethanolamine (PE) and insertion to membranes, which is necessary for autophagy. Preferred substrate is GABARAPL2 followed by MAP1LC3A and GABARAP. Protease activity is also required to counteract formation of high-molecular weight conjugates of ATG8 proteins (ATG8ylation): acts as a deubiquitinating-like enzyme that removes ATG8 conjugated to other proteins, such as ATG3. In addition to the protease activity, also mediates delipidation of ATG8 family proteins. Catalyzes delipidation of PE-conjugated forms of ATG8 proteins during macroautophagy. Compared to ATG4B, the major protein for proteolytic activation of ATG8 proteins, shows weaker ability to cleave the C-terminal amino acid of ATG8 proteins, while it displays stronger delipidation activity. Involved in phagophore growth during mitophagy independently of its protease activity and of ATG8 proteins: acts by regulating ATG9A trafficking to mitochondria and promoting phagophore-endoplasmic reticulum contacts during the lipid transfer phase of mitophagy. The polypeptide is Cysteine protease ATG4A (Mus musculus (Mouse)).